Reading from the N-terminus, the 503-residue chain is Probable cytosol aminopeptidase (503 aa).

Mn(2+) is bound by residues Lys270 and Asp275. Lys282 is a catalytic residue. Mn(2+) contacts are provided by Asp293, Asp352, and Glu354. Residue Arg356 is part of the active site.

The protein belongs to the peptidase M17 family. The cofactor is Mn(2+).

Its subcellular location is the cytoplasm. It carries out the reaction Release of an N-terminal amino acid, Xaa-|-Yaa-, in which Xaa is preferably Leu, but may be other amino acids including Pro although not Arg or Lys, and Yaa may be Pro. Amino acid amides and methyl esters are also readily hydrolyzed, but rates on arylamides are exceedingly low.. The enzyme catalyses Release of an N-terminal amino acid, preferentially leucine, but not glutamic or aspartic acids.. Functionally, presumably involved in the processing and regular turnover of intracellular proteins. Catalyzes the removal of unsubstituted N-terminal amino acids from various peptides. In Escherichia coli O139:H28 (strain E24377A / ETEC), this protein is Probable cytosol aminopeptidase.